Here is a 250-residue protein sequence, read N- to C-terminus: 2-C-methyl-D-erythritol 4-phosphate cytidylyltransferase (250 aa).

The protein belongs to the IspD/TarI cytidylyltransferase family. IspD subfamily.

The catalysed reaction is 2-C-methyl-D-erythritol 4-phosphate + CTP + H(+) = 4-CDP-2-C-methyl-D-erythritol + diphosphate. Its pathway is isoprenoid biosynthesis; isopentenyl diphosphate biosynthesis via DXP pathway; isopentenyl diphosphate from 1-deoxy-D-xylulose 5-phosphate: step 2/6. Its function is as follows. Catalyzes the formation of 4-diphosphocytidyl-2-C-methyl-D-erythritol from CTP and 2-C-methyl-D-erythritol 4-phosphate (MEP). The sequence is that of 2-C-methyl-D-erythritol 4-phosphate cytidylyltransferase from Streptomyces avermitilis (strain ATCC 31267 / DSM 46492 / JCM 5070 / NBRC 14893 / NCIMB 12804 / NRRL 8165 / MA-4680).